A 168-amino-acid chain; its full sequence is G/U mismatch-specific DNA glycosylase (168 aa).

It belongs to the uracil-DNA glycosylase (UDG) superfamily. TDG/mug family. In terms of assembly, binds DNA as a monomer.

Its subcellular location is the cytoplasm. The enzyme catalyses Specifically hydrolyzes mismatched double-stranded DNA and polynucleotides, releasing free uracil.. In terms of biological role, excises ethenocytosine and uracil, which can arise by alkylation or deamination of cytosine, respectively, from the corresponding mispairs with guanine in ds-DNA. It is capable of hydrolyzing the carbon-nitrogen bond between the sugar-phosphate backbone of the DNA and the mispaired base. The complementary strand guanine functions in substrate recognition. Required for DNA damage lesion repair in stationary-phase cells. This is G/U mismatch-specific DNA glycosylase from Enterobacter sp. (strain 638).